A 430-amino-acid chain; its full sequence is Adenylosuccinate synthetase (430 aa).

GTP contacts are provided by residues 12 to 18 (GDEGKGK) and 40 to 42 (GHT). The Proton acceptor role is filled by D13. D13 and G40 together coordinate Mg(2+). Residues 13 to 16 (DEGK), 38 to 41 (NAGH), T128, R142, Q223, T238, and R302 each bind IMP. H41 functions as the Proton donor in the catalytic mechanism. A substrate-binding site is contributed by 298–304 (TTTGRPR). GTP is bound by residues R304, 330–332 (SID), and 413–415 (SVG).

This sequence belongs to the adenylosuccinate synthetase family. As to quaternary structure, homodimer. Mg(2+) is required as a cofactor.

The protein localises to the cytoplasm. The enzyme catalyses IMP + L-aspartate + GTP = N(6)-(1,2-dicarboxyethyl)-AMP + GDP + phosphate + 2 H(+). It participates in purine metabolism; AMP biosynthesis via de novo pathway; AMP from IMP: step 1/2. In terms of biological role, plays an important role in the de novo pathway of purine nucleotide biosynthesis. Catalyzes the first committed step in the biosynthesis of AMP from IMP. The polypeptide is Adenylosuccinate synthetase (Lactococcus lactis subsp. cremoris (strain SK11)).